A 353-amino-acid chain; its full sequence is Guanine nucleotide-binding protein alpha-3 subunit (353 aa).

Residue Gly-2 is the site of N-myristoyl glycine attachment. A lipid anchor (S-palmitoyl cysteine) is attached at Cys-4. One can recognise a G-alpha domain in the interval 32–353 (KVVKLLLLGA…IQANLQGCGL (322 aa)). The interval 35-48 (KLLLLGAGECGKST) is G1 motif. GTP is bound by residues 40-47 (GAGECGKS), 176-182 (LLSRIKT), 201-205 (DVGGQ), 270-273 (NKKD), and Ala-326. Ser-47 and Thr-182 together coordinate Mg(2+). Positions 174-182 (DILLSRIKT) are G2 motif. The segment at 197-206 (FRVFDVGGQR) is G3 motif. The interval 266-273 (ILFLNKKD) is G4 motif. The segment at 324-329 (TCATDT) is G5 motif.

Belongs to the G-alpha family. G(q) subfamily. G proteins are composed of 3 units; alpha, beta and gamma. The alpha chain contains the guanine nucleotide binding site.

Functionally, guanine nucleotide-binding proteins (G proteins) are involved as modulators or transducers in various transmembrane signaling systems. Promotes transcription of 3',5'-cyclic phosphodiesterases pde-1 and pde-5, leading to reduced cGMP levels in sensory neurons. This causes suppression of insulin production and signaling which leads to increased daf-16 activity and contributes to increased adult lifespan and resistance to oxidative stress. In addition, by reducing cGMP levels, inhibits TGF-beta signaling pathways. Involved in behavioral response to P.aeruginosa by controlling the expression of daf-7, a member of the TGF-beta family, in ASJ sensory neurons. Plays a role in the avoidance response to the noxious chemical quinine in ASH sensory neurons. The protein is Guanine nucleotide-binding protein alpha-3 subunit of Caenorhabditis elegans.